A 211-amino-acid polypeptide reads, in one-letter code: MVAHNQVAADNAVSTAAEPRRRPEPSSSSSSSPAAPARPRPCPAVPAPAPGDTHFRTFRSHADYRRITRASALLDACGFYWGPLSVHGAHERLRAEPVGTFLVRDSRQRNCFFALSVKMASGPTSIRVHFQAGRFHLDGSRESFDCLFELLEHYVAAPRRMLGAPLRQRRVRPLQELCRQRIVATVGRENLARIPLNPVLRDYLSSFPFQI.

The disordered stretch occupies residues Met1–Thr53. A compositionally biased stretch (low complexity) spans Pro25–Ala35. Pro residues predominate over residues Pro36–Ala49. Residues Phe55 to Arg66 form a kinase inhibitory region (KIR) region. An extended SH2 subdomain (ESS) region spans residues Ile67–Gly78. The SH2 domain occupies Phe79 to Leu174. The SOCS box domain occupies Met161 to Gln210. Residues Pro173–Ile182 form an interaction with Elongin BC complex region.

Belongs to the SOCS1 family. Interacts with multiple activated signaling proteins of the tyrosine kinase signaling pathway including JAK family kinases, TEC, KIT, GRB2 and VAV. Binding to JAKs is mediated through the KIR and SH2 domains to a phosphorylated tyrosine residue within the JAK JH1 domain. Binds the SH3 domain of GRB2 via diproline determinants in the N-terminus, and the N-terminal regulatory domain of VAV. Interacts with the Elongin BC complex (ELOB and ELOC). Component of an ECS CBC(SOCS1) E3 ubiquitin-protein ligase complex which contains Elongin BC, CUL5, RBX1 and SOCS1. Interacts (via SH2 domain and SOCS box) with TRIM8. Interacts with AXL, CUL2 and FGFR3. Interacts with INSR. Interacts with TRIM8. Interacts with DCUN1D1. Interacts with IFNGR1. In terms of tissue distribution, expressed in all tissues with high expression in spleen, small intestine and peripheral blood leukocytes.

It localises to the nucleus. The protein resides in the cytoplasmic vesicle. It participates in protein modification; protein ubiquitination. Essential negative regulator of type I and type II interferon (IFN) signaling, as well as that of other cytokines, including IL2, IL4, IL6 and leukemia inhibitory factor (LIF). Downregulates cytokine signaling by inhibiting the JAK/STAT signaling pathway. Acts by binding to JAK proteins and to IFNGR1 and inhibiting their kinase activity. In vitro, suppresses Tec protein-tyrosine activity. Regulates IFN-gamma (IFNG)-mediated sensory neuron survival. Probable substrate recognition component of an ECS (Elongin BC-CUL2/5-SOCS-box protein) E3 ubiquitin ligase complex which mediates the ubiquitination and subsequent proteasomal degradation of target proteins. This chain is Suppressor of cytokine signaling 1 (SOCS1), found in Homo sapiens (Human).